Consider the following 402-residue polypeptide: Mannonate dehydratase 1 (402 aa).

This sequence belongs to the mannonate dehydratase family. It depends on Fe(2+) as a cofactor. The cofactor is Mn(2+).

It catalyses the reaction D-mannonate = 2-dehydro-3-deoxy-D-gluconate + H2O. Its pathway is carbohydrate metabolism; pentose and glucuronate interconversion. Functionally, catalyzes the dehydration of D-mannonate. The polypeptide is Mannonate dehydratase 1 (uxuA1) (Agrobacterium fabrum (strain C58 / ATCC 33970) (Agrobacterium tumefaciens (strain C58))).